A 35-amino-acid polypeptide reads, in one-letter code: Tamulustoxin (35 aa).

3 disulfides stabilise this stretch: Cys-2–Cys-22, Cys-7–Cys-31, and Cys-11–Cys-33.

In terms of tissue distribution, expressed by the venom gland.

It is found in the secreted. In terms of biological role, blocks Kv1.6/KCNA6 potassium channels. The polypeptide is Tamulustoxin (Hottentotta tamulus (Eastern Indian scorpion)).